Reading from the N-terminus, the 464-residue chain is Divalent metal cation transporter MntH (464 aa).

The next 11 helical transmembrane spans lie at 57–77 (ILIAVGYMDPGNWITSIAGGA), 82–102 (SLLSVILISSLIAMLLQSMAA), 125–145 (GIILWLITESAIMATDVAEII), 157–177 (IPLVVGILITTADVLILLLLM), 186–206 (AIVATLVAVILLVFTYEVFLA), 229–249 (MLYLALGIVGATVMPHDLYLG), 281–301 (LTIAFIVNSLLLILGAALFFG), 321–341 (IVGAIASPMLSMLFAVALLSS), 376–396 (LLSVTPVLIFAIYYHGNEAKI), 399–419 (LLTLSQVFLSVALPFAIVPLV), and 443–463 (VATVVLVSLNIYLILQTVGVI).

The protein belongs to the NRAMP family.

The protein resides in the cell membrane. Its function is as follows. H(+)-stimulated, divalent metal cation uptake system. The polypeptide is Divalent metal cation transporter MntH (Levilactobacillus brevis (Lactobacillus brevis)).